We begin with the raw amino-acid sequence, 190 residues long: GTP cyclohydrolase 1 (190 aa).

Positions 80, 83, and 151 each coordinate Zn(2+).

This sequence belongs to the GTP cyclohydrolase I family. In terms of assembly, toroid-shaped homodecamer, composed of two pentamers of five dimers.

It carries out the reaction GTP + H2O = 7,8-dihydroneopterin 3'-triphosphate + formate + H(+). The protein operates within cofactor biosynthesis; 7,8-dihydroneopterin triphosphate biosynthesis; 7,8-dihydroneopterin triphosphate from GTP: step 1/1. The chain is GTP cyclohydrolase 1 (folE) from Rickettsia prowazekii (strain Madrid E).